A 169-amino-acid chain; its full sequence is Probable calcium-binding protein CML20 (169 aa).

Positions 1-23 (MSSIYRTVSRKEKPRRHHGLTTQ) are disordered. EF-hand domains lie at 23–58 (QKKQEIKEAFELFDTDGSGTIDAKELNVAMRALGFE), 59–94 (MTEEQINKMIADVDKDGSGAIDFDEFVHMMTAKIGE), 96–131 (DTKEELTKAFQIIDLDKNGKISPDDIKRMAKDLGEN), and 132–167 (FTDAEIREMVEEADRDRDGEVNMDEFMRMMRRTAYG). 19 residues coordinate Ca(2+): aspartate 36, aspartate 38, serine 40, threonine 42, glutamate 47, aspartate 72, aspartate 74, serine 76, glutamate 83, aspartate 109, aspartate 111, asparagine 113, lysine 115, aspartate 120, aspartate 145, aspartate 147, aspartate 149, glutamate 151, and glutamate 156.

Interacts with TON1A and TON1B. Interacts with SAC3A and SAC3B. Interacts with UCH1 and UCH2.

In terms of biological role, potential calcium sensor. The chain is Probable calcium-binding protein CML20 from Arabidopsis thaliana (Mouse-ear cress).